The primary structure comprises 130 residues: Large ribosomal subunit protein bL12 (130 aa).

It belongs to the bacterial ribosomal protein bL12 family. In terms of assembly, homodimer. Part of the ribosomal stalk of the 50S ribosomal subunit. Forms a multimeric L10(L12)X complex, where L10 forms an elongated spine to which 2 to 4 L12 dimers bind in a sequential fashion. Binds GTP-bound translation factors.

Its function is as follows. Forms part of the ribosomal stalk which helps the ribosome interact with GTP-bound translation factors. Is thus essential for accurate translation. The polypeptide is Large ribosomal subunit protein bL12 (Thermobifida fusca (strain YX)).